A 204-amino-acid chain; its full sequence is Holliday junction branch migration complex subunit RuvA (204 aa).

A domain I region spans residues 1–64; sequence MIGRLRGTLI…EDAQLLYGFN (64 aa). The tract at residues 65-143 is domain II; it reads TVSERALFRE…GWGAGDLFTP (79 aa). The segment at 144 to 155 is flexible linker; it reads ATDAAPVDSTPV. The tract at residues 156–204 is domain III; the sequence is IAQNAQEEAMSALLALGYKPPQASKAVSQVAKAGMSSEELIREALKSMV.

The protein belongs to the RuvA family. In terms of assembly, homotetramer. Forms an RuvA(8)-RuvB(12)-Holliday junction (HJ) complex. HJ DNA is sandwiched between 2 RuvA tetramers; dsDNA enters through RuvA and exits via RuvB. An RuvB hexamer assembles on each DNA strand where it exits the tetramer. Each RuvB hexamer is contacted by two RuvA subunits (via domain III) on 2 adjacent RuvB subunits; this complex drives branch migration. In the full resolvosome a probable DNA-RuvA(4)-RuvB(12)-RuvC(2) complex forms which resolves the HJ.

The protein resides in the cytoplasm. Its function is as follows. The RuvA-RuvB-RuvC complex processes Holliday junction (HJ) DNA during genetic recombination and DNA repair, while the RuvA-RuvB complex plays an important role in the rescue of blocked DNA replication forks via replication fork reversal (RFR). RuvA specifically binds to HJ cruciform DNA, conferring on it an open structure. The RuvB hexamer acts as an ATP-dependent pump, pulling dsDNA into and through the RuvAB complex. HJ branch migration allows RuvC to scan DNA until it finds its consensus sequence, where it cleaves and resolves the cruciform DNA. This chain is Holliday junction branch migration complex subunit RuvA, found in Vibrio cholerae serotype O1 (strain ATCC 39541 / Classical Ogawa 395 / O395).